A 144-amino-acid polypeptide reads, in one-letter code: Glutamyl-tRNA(Gln) amidotransferase subunit C, mitochondrial (144 aa).

Residues 1 to 17 (MFRRSVSFVRSHVLRSF) constitute a mitochondrion transit peptide.

This sequence belongs to the GatC family. In terms of assembly, subunit of the heterotrimeric GatCAB amidotransferase (AdT) complex, composed of A, B and C subunits.

It is found in the mitochondrion. It catalyses the reaction L-glutamyl-tRNA(Gln) + L-glutamine + ATP + H2O = L-glutaminyl-tRNA(Gln) + L-glutamate + ADP + phosphate + H(+). Functionally, allows the formation of correctly charged Gln-tRNA(Gln) through the transamidation of misacylated Glu-tRNA(Gln) in the mitochondria. The reaction takes place in the presence of glutamine and ATP through an activated gamma-phospho-Glu-tRNA(Gln). The polypeptide is Glutamyl-tRNA(Gln) amidotransferase subunit C, mitochondrial (Ixodes scapularis (Black-legged tick)).